A 400-amino-acid polypeptide reads, in one-letter code: Spermatogenic leucine zipper protein 1 (400 aa).

Positions 1-27 (MADSDSSSEMPAHSPSPSPIPCAKQKP) are disordered. The residue at position 106 (Ser106) is a Phosphoserine. The interval 116–127 (RNKLRFKDDLFI) is helix-loop-helix motif. The basic motif stretch occupies residues 128-193 (HFDPERENTM…HIRGEYRKLR (66 aa)). Coiled-coil stretches lie at residues 182–231 (SVHI…KDIV) and 268–293 (LIAA…LHLH). Ser207 bears the Phosphoserine mark. Residues 252 to 273 (LEEQVKKLSQDTHSLHLIAALL) are leucine-zipper. Positions 295-332 (AGPGHEKPLQTSGEQDKKCGEQDKKCGEQDKKCGEQDK) are disordered.

As to quaternary structure, interacts with PPP1CC isoform gamma-2. In terms of processing, phosphorylated by MAPK1/ERK2 and MAPK3/ERK1.

The protein localises to the cytoplasm. Its subcellular location is the nucleus. Transcription factor that binds to the DNA sequence 5'-CANNTG-3'(E box) and the G-box motif. May play an important role in the regulation of cell proliferation and differentiation during spermatogenesis. The polypeptide is Spermatogenic leucine zipper protein 1 (Spz1) (Rattus norvegicus (Rat)).